The sequence spans 318 residues: Ribosomal RNA small subunit methyltransferase H (318 aa).

S-adenosyl-L-methionine-binding positions include 35-37, D54, F83, D104, and Q111; that span reads GGH.

This sequence belongs to the methyltransferase superfamily. RsmH family.

It localises to the cytoplasm. The catalysed reaction is cytidine(1402) in 16S rRNA + S-adenosyl-L-methionine = N(4)-methylcytidine(1402) in 16S rRNA + S-adenosyl-L-homocysteine + H(+). In terms of biological role, specifically methylates the N4 position of cytidine in position 1402 (C1402) of 16S rRNA. The chain is Ribosomal RNA small subunit methyltransferase H from Latilactobacillus sakei subsp. sakei (strain 23K) (Lactobacillus sakei subsp. sakei).